Consider the following 227-residue polypeptide: Cysteine-rich hydrophobic domain-containing protein 1 (227 aa).

The interval 1 to 84 (MSILLPNMAE…PPRVVSEEHL (84 aa)) is disordered. A compositionally biased stretch (acidic residues) spans 13–23 (TISELEEEEEA). Low complexity predominate over residues 24-44 (ATSSSSPSSSPSSSSSSSVSG). The segment covering 45–72 (PDEDEEDEEEEEEEDEEEEDEEEEEEEV) has biased composition (acidic residues). A coiled-coil region spans residues 46-73 (DEDEEDEEEEEEEDEEEEDEEEEEEEVP).

The protein belongs to the CHIC family. Palmitoylated. As to expression, expressed moderately in the brain.

Its subcellular location is the cell membrane. The protein resides in the cytoplasmic vesicle. The sequence is that of Cysteine-rich hydrophobic domain-containing protein 1 (Chic1) from Mus musculus (Mouse).